The following is a 177-amino-acid chain: Protein BROTHER of FT and TFL 1 (177 aa).

It belongs to the phosphatidylethanolamine-binding protein family.

Its subcellular location is the cytoplasm. Functionally, may form complexes with phosphorylated ligands by interfering with kinases and their effectors. This chain is Protein BROTHER of FT and TFL 1 (BFT), found in Arabidopsis thaliana (Mouse-ear cress).